Here is a 240-residue protein sequence, read N- to C-terminus: Ribosomal RNA large subunit methyltransferase E (240 aa).

Positions 1–20 are enriched in gly residues; that stretch reads MSKAGGNKGGSRTGGRGGAG. Positions 1–33 are disordered; sequence MSKAGGNKGGSRTGGRGGAGSSNLHVRVKKKAG. Residues Gly-92, Trp-94, Asp-115, Asp-131, and Asp-155 each contribute to the S-adenosyl-L-methionine site. Lys-195 (proton acceptor) is an active-site residue.

Belongs to the class I-like SAM-binding methyltransferase superfamily. RNA methyltransferase RlmE family.

The protein resides in the cytoplasm. It catalyses the reaction uridine(2552) in 23S rRNA + S-adenosyl-L-methionine = 2'-O-methyluridine(2552) in 23S rRNA + S-adenosyl-L-homocysteine + H(+). In terms of biological role, specifically methylates the uridine in position 2552 of 23S rRNA at the 2'-O position of the ribose in the fully assembled 50S ribosomal subunit. The protein is Ribosomal RNA large subunit methyltransferase E of Brucella abortus (strain S19).